The sequence spans 121 residues: Dihydroneopterin aldolase (121 aa).

Residues E22, Y54, and 73-74 (LE) contribute to the substrate site. The active-site Proton donor/acceptor is K100.

This sequence belongs to the DHNA family. As to quaternary structure, homooctamer. Four molecules assemble into a ring, and two rings come together to give a cylinder with a hole of at least 13 a diameter.

The catalysed reaction is 7,8-dihydroneopterin = 6-hydroxymethyl-7,8-dihydropterin + glycolaldehyde. The enzyme catalyses 7,8-dihydroneopterin = 7,8-dihydromonapterin. It participates in cofactor biosynthesis; tetrahydrofolate biosynthesis; 2-amino-4-hydroxy-6-hydroxymethyl-7,8-dihydropteridine diphosphate from 7,8-dihydroneopterin triphosphate: step 3/4. Its function is as follows. Catalyzes the conversion of 7,8-dihydroneopterin to 6-hydroxymethyl-7,8-dihydropterin. Can also catalyze the epimerization of carbon 2' of dihydroneopterin to dihydromonapterin. The protein is Dihydroneopterin aldolase (folB) of Staphylococcus aureus (strain MRSA252).